Here is a 460-residue protein sequence, read N- to C-terminus: Chromosomal replication initiator protein DnaA (460 aa).

Residues 1–84 (MAVSLWQQCI…RFDIGSRPSA (84 aa)) form a domain I, interacts with DnaA modulators region. Residues 84-123 (AKKPEPAPVAAVRVPNPQTKASVGTSFNTTEPVANANHRS) form a domain II region. The tract at residues 124-340 (NINPTYQFDN…GALNRVIANA (217 aa)) is domain III, AAA+ region. ATP contacts are provided by glycine 168, glycine 170, lysine 171, and threonine 172. The segment at 341–460 (NFTGRPITID…YANLIRTLSS (120 aa)) is domain IV, binds dsDNA.

Belongs to the DnaA family. As to quaternary structure, oligomerizes as a right-handed, spiral filament on DNA at oriC.

Its subcellular location is the cytoplasm. Plays an essential role in the initiation and regulation of chromosomal replication. ATP-DnaA binds to the origin of replication (oriC) to initiate formation of the DNA replication initiation complex once per cell cycle. Binds the DnaA box (a 9 base pair repeat at the origin) and separates the double-stranded (ds)DNA. Forms a right-handed helical filament on oriC DNA; dsDNA binds to the exterior of the filament while single-stranded (ss)DNA is stabiized in the filament's interior. The ATP-DnaA-oriC complex binds and stabilizes one strand of the AT-rich DNA unwinding element (DUE), permitting loading of DNA polymerase. After initiation quickly degrades to an ADP-DnaA complex that is not apt for DNA replication. Binds acidic phospholipids. The protein is Chromosomal replication initiator protein DnaA of Shewanella sp. (strain ANA-3).